The following is a 959-amino-acid chain: MFGNNRPMFGGSNLSFGSNTSSFGGQQSQQPNSLFGNSNNNNNSTSNNAQSGFGGFTSAAGSNSNSLFGNNNTQNNGAFGQSMGATQNSPFGSLNSSNASNGNTFGGSSSMGSFGGNTNNAFNNNSNSTNSPFGFNKPNTGGTLFGSQNNNSAGTSSLFGGQSTSTTGTFGNTGSSFGTGLNGNGSNIFGAGNNSQSNTTGSLFGNQQSSAFGTNNQQGSLFGQQSQNTNNAFGNQNQLGGSSFGSKPVGSGSLFGQSNNTLGNTTNNRNGLFGQMNSSNQGSSNSGLFGQNSMNSSTQGVFGQNNNQMQINGNNNNSLFGKANTFSNSASGGLFGQNNQQQGSGLFGQNSQTSGSSGLFGQNNQKQPNTFTQSNTGIGLFGQNNNQQQQSTGLFGAKPAGTTGSLFGGNSSTQPNSLFGTTNVPTSNTQSQQGNSLFGATKLTNMPFGGNPTANQSGSGNSLFGTKPASTTGSLFGNNTASTTVPSTNGLFGNNANNSTSTTNTGLFGAKPDSQSKPALGGGLFGNSNSNSSTIGQNKPVFGGTTQNTGLFGATGTNSSAVGSTGKLFGQNNNTLNVGTQNVPPVNNTTQNALLGTTAVPSLQQAPVTNEQLFSKISIPNSITNPVKATTSKVNADMKRNSSLTSAYRLAPKPLFAPSSNGDAKFQKWGKTLERSDRGSSTSNSITDPESSYLNSNDLLFDPDRRYLKHLVIKNNKNLNVINHNDDEASKVKLVTFTTESASKDDQASSSIAASKLTEKAHSPQTDLKDDHDESTPDPQSKSPNGSTSIPMIENEKISSKVPGLLSNDVTFFKNNYYISPSIETLGNKSLIELRKINNLVIGHRNYGKVEFLEPVDLLNTPLDTLCGDLVTFGPKSCSIYENCSIKPEKGEGINVRCRVTLYSCFPIDKETRKPIKNITHPLLKRSIAKLKENPVYKFESYDPVTGTYSYTIDHPVLT.

The interval 1–104 (MFGNNRPMFG…NSSNASNGNT (104 aa)) is disordered. FG repeat units follow at residues 2–3 (FG), 9–10 (FG), and Gly-17. The span at 12 to 36 (SNLSFGSNTSSFGGQQSQQPNSLFG) shows a compositional bias: polar residues. One copy of the SLFG 1; approximate repeat lies at 21-24 (SSFG). The stretch at 33-36 (SLFG) is one SLFG 2 repeat. Residues 37–48 (NSNNNNNSTSNN) show a composition bias toward low complexity. The SLFG 3; approximate repeat unit spans residues 51–54 (SGFG). 2 stretches are compositionally biased toward low complexity: residues 56 to 81 (FTSAAGSNSNSLFGNNNTQNNGAFGQ) and 92 to 104 (GSLNSSNASNGNT). One copy of the SLFG 4 repeat lies at 66-69 (SLFG). The stretch at 77–80 (GAFG) is one GLFG 1; approximate repeat. An SLFG 5; approximate repeat occupies 89 to 92 (SPFG). One copy of the FG 4 repeat lies at 105–106 (FG). One copy of the GLFG 2; approximate repeat lies at 112–115 (GSFG). Residues 121–136 (AFNNNSNSTNSPFGFN) show a composition bias toward low complexity. The segment at 121–172 (AFNNNSNSTNSPFGFNKPNTGGTLFGSQNNNSAGTSSLFGGQSTSTTGTFGN) is disordered. One copy of the SLFG 6; approximate repeat lies at 131-134 (SPFG). Polar residues predominate over residues 137-153 (KPNTGGTLFGSQNNNSA). One copy of the FG 5 repeat lies at 145–146 (FG). Positions 154-172 (GTSSLFGGQSTSTTGTFGN) are enriched in low complexity. One copy of the SLFG 7 repeat lies at 157–160 (SLFG). Residues 168–171 (GTFG) form a GLFG 3; approximate repeat. An SLFG 8; approximate repeat occupies 175 to 178 (SSFG). The stretch at 189 to 190 (FG) is one FG 6 repeat. Positions 190–394 (GAGNNSQSNT…NNQQQQSTGL (205 aa)) are disordered. Positions 192–245 (GNNSQSNTTGSLFGNQQSSAFGTNNQQGSLFGQQSQNTNNAFGNQNQLGGSSFG) are enriched in polar residues. One copy of the SLFG 9 repeat lies at 202-205 (SLFG). An SLFG 10; approximate repeat occupies 210-213 (SAFG). An SLFG 11 repeat occupies 220-223 (SLFG). Residues 233–234 (FG) form an FG 7 repeat. An SLFG 12; approximate repeat occupies 242 to 245 (SSFG). The SLFG 13 repeat unit spans residues 253 to 256 (SLFG). Residues 259-293 (NNTLGNTTNNRNGLFGQMNSSNQGSSNSGLFGQNS) show a composition bias toward low complexity. GLFG repeat units follow at residues 271-274 (GLFG) and 287-290 (GLFG). Residues 294 to 303 (MNSSTQGVFG) show a composition bias toward polar residues. The stretch at 300-303 (GVFG) is one GLFG 6; approximate repeat. Residues 304–317 (QNNNQMQINGNNNN) are compositionally biased toward low complexity. One copy of the SLFG 14 repeat lies at 318–321 (SLFG). GLFG repeat units follow at residues 333–336 (GLFG), 345–348 (GLFG), 358–361 (GLFG), 379–382 (GLFG), and 393–396 (GLFG). Over residues 336 to 352 (GQNNQQQGSGLFGQNSQ) the composition is skewed to low complexity. A compositionally biased stretch (polar residues) spans 353 to 377 (TSGSSGLFGQNNQKQPNTFTQSNTG). SLFG repeat units lie at residues 405-408 (SLFG), 417-420 (SLFG), and 436-439 (SLFG). Residues 448–449 (FG) form an FG 8 repeat. One copy of the SLFG 18 repeat lies at 462–465 (SLFG). One copy of the SLFG 19; approximate repeat lies at 474-477 (SLFG). 3 GLFG repeats span residues 490 to 493 (GLFG), 506 to 509 (GLFG), and 523 to 526 (GLFG). An FG 9 repeat occupies 542-543 (FG). The stretch at 550–553 (GLFG) is one GLFG 15 repeat. Residues 569 to 570 (FG) form an FG 10 repeat. Disordered regions lie at residues 672–697 (TLERSDRGSSTSNSITDPESSYLNSN) and 745–794 (DDQA…PMIE). A compositionally biased stretch (polar residues) spans 679–697 (GSSTSNSITDPESSYLNSN). A compositionally biased stretch (basic and acidic residues) spans 757-775 (LTEKAHSPQTDLKDDHDES). Phosphoserine occurs at positions 763 and 783. Polar residues predominate over residues 777–790 (PDPQSKSPNGSTSI). Positions 814–956 (KNNYYISPSI…GTYSYTIDHP (143 aa)) constitute a Peptidase S59 domain. The segment at 816–955 (NYYISPSIET…TGTYSYTIDH (140 aa)) is nucleoporin RNA-binding motif (NRM).

It belongs to the nucleoporin GLFG family. Component of the nuclear pore complex (NPC). NPC constitutes the exclusive means of nucleocytoplasmic transport. NPCs allow the passive diffusion of ions and small molecules and the active, nuclear transport receptor-mediated bidirectional transport of macromolecules such as proteins, RNAs, ribonucleoparticles (RNPs), and ribosomal subunits across the nuclear envelope. Due to its 8-fold rotational symmetry, all subunits are present with 8 copies or multiples thereof. Through its FG repeats NUP100 interacts with numerous karyopherins including KAP95, and MEX67.

It localises to the nucleus. The protein resides in the nuclear pore complex. It is found in the nucleus membrane. In terms of biological role, functions as a component of the nuclear pore complex (NPC). NPC components, collectively referred to as nucleoporins (NUPs), can play the role of both NPC structural components and of docking or interaction partners for transiently associated nuclear transport factors. Active directional transport is assured by both, a Phe-Gly (FG) repeat affinity gradient for these transport factors across the NPC and a transport cofactor concentration gradient across the nuclear envelope (GSP1 and GSP2 GTPases associated predominantly with GTP in the nucleus, with GDP in the cytoplasm). NUP100 plays an important role in several nuclear export and import pathways including poly(A)+ RNA and protein transport. In Saccharomyces cerevisiae (strain ATCC 204508 / S288c) (Baker's yeast), this protein is Nucleoporin NUP100/NSP100 (NUP100).